Here is a 446-residue protein sequence, read N- to C-terminus: 3-phosphoshikimate 1-carboxyvinyltransferase (446 aa).

3-phosphoshikimate contacts are provided by Lys-21, Ser-22, and Arg-26. Residue Lys-21 participates in phosphoenolpyruvate binding. Residues Gly-92 and Arg-120 each coordinate phosphoenolpyruvate. 3-phosphoshikimate-binding residues include Ser-165, Gln-166, Asp-308, and Lys-335. A phosphoenolpyruvate-binding site is contributed by Gln-166. The active-site Proton acceptor is the Asp-308. Residues Arg-339, Arg-380, and Lys-406 each coordinate phosphoenolpyruvate.

The protein belongs to the EPSP synthase family. Monomer.

It localises to the cytoplasm. It catalyses the reaction 3-phosphoshikimate + phosphoenolpyruvate = 5-O-(1-carboxyvinyl)-3-phosphoshikimate + phosphate. Its pathway is metabolic intermediate biosynthesis; chorismate biosynthesis; chorismate from D-erythrose 4-phosphate and phosphoenolpyruvate: step 6/7. Functionally, catalyzes the transfer of the enolpyruvyl moiety of phosphoenolpyruvate (PEP) to the 5-hydroxyl of shikimate-3-phosphate (S3P) to produce enolpyruvyl shikimate-3-phosphate and inorganic phosphate. The sequence is that of 3-phosphoshikimate 1-carboxyvinyltransferase from Chlamydia caviae (strain ATCC VR-813 / DSM 19441 / 03DC25 / GPIC) (Chlamydophila caviae).